We begin with the raw amino-acid sequence, 176 residues long: ATP-dependent protease subunit HslV (176 aa).

Thr2 is a catalytic residue. Na(+)-binding residues include Gly157, Cys160, and Thr163.

This sequence belongs to the peptidase T1B family. HslV subfamily. As to quaternary structure, a double ring-shaped homohexamer of HslV is capped on each side by a ring-shaped HslU homohexamer. The assembly of the HslU/HslV complex is dependent on binding of ATP.

It is found in the cytoplasm. It carries out the reaction ATP-dependent cleavage of peptide bonds with broad specificity.. Its activity is regulated as follows. Allosterically activated by HslU binding. Its function is as follows. Protease subunit of a proteasome-like degradation complex believed to be a general protein degrading machinery. The sequence is that of ATP-dependent protease subunit HslV from Erwinia tasmaniensis (strain DSM 17950 / CFBP 7177 / CIP 109463 / NCPPB 4357 / Et1/99).